The primary structure comprises 379 residues: Protein RecA (379 aa).

The span at 1–14 (MSNEIKSISSSNSS) shows a compositional bias: low complexity. The interval 1-24 (MSNEIKSISSSNSSCPPNEARSGE) is disordered. Position 84 to 91 (84 to 91 (GPESSGKT)) interacts with ATP.

Belongs to the RecA family.

Its subcellular location is the cytoplasm. Its function is as follows. Can catalyze the hydrolysis of ATP in the presence of single-stranded DNA, the ATP-dependent uptake of single-stranded DNA by duplex DNA, and the ATP-dependent hybridization of homologous single-stranded DNAs. It interacts with LexA causing its activation and leading to its autocatalytic cleavage. The chain is Protein RecA from Prochlorococcus marinus (strain SARG / CCMP1375 / SS120).